We begin with the raw amino-acid sequence, 389 residues long: tRNA-specific 2-thiouridylase MnmA (389 aa).

ATP contacts are provided by residues 30 to 37 (GLSGGVDS) and Leu-56. The active-site Nucleophile is Cys-117. A disulfide bridge connects residues Cys-117 and Cys-216. Residue Gly-142 coordinates ATP. The interval 166-168 (KDQ) is interaction with tRNA. Cys-216 serves as the catalytic Cysteine persulfide intermediate. Residues 321–322 (RY) are interaction with tRNA.

Belongs to the MnmA/TRMU family.

The protein localises to the cytoplasm. The enzyme catalyses S-sulfanyl-L-cysteinyl-[protein] + uridine(34) in tRNA + AH2 + ATP = 2-thiouridine(34) in tRNA + L-cysteinyl-[protein] + A + AMP + diphosphate + H(+). Functionally, catalyzes the 2-thiolation of uridine at the wobble position (U34) of tRNA, leading to the formation of s(2)U34. The protein is tRNA-specific 2-thiouridylase MnmA of Synechococcus sp. (strain CC9902).